Here is a 233-residue protein sequence, read N- to C-terminus: C-type lectin domain family 2 member D6 (233 aa).

Positions 1–45 (MPSSAHLQDSPPLLSRTLTQNEGQTSLRQSSSCGPSATSASESLS) are disordered. At 1 to 73 (MPSSAHLQDS…GIILPESPAK (73 aa)) the chain is on the cytoplasmic side. Residues 16-29 (RTLTQNEGQTSLRQ) are compositionally biased toward polar residues. The span at 30-43 (SSSCGPSATSASES) shows a compositional bias: low complexity. Residues 74-94 (LLCCCAVIVVLSVAVVALSVA) form a helical; Signal-anchor for type II membrane protein membrane-spanning segment. Topologically, residues 95–233 (LSVKKTPQIS…KLNSYTSQCQ (139 aa)) are extracellular. The C-type lectin domain occupies 119–230 (VGNKCYYFNE…ICSKLNSYTS (112 aa)). The N-linked (GlcNAc...) asparagine glycan is linked to asparagine 132.

Its subcellular location is the cell membrane. In terms of biological role, lectin-type cell surface receptor. The sequence is that of C-type lectin domain family 2 member D6 (Clec2d6) from Rattus norvegicus (Rat).